The following is a 372-amino-acid chain: Glutamate 5-kinase (372 aa).

Lys-14 is a binding site for ATP. Substrate-binding residues include Ser-54, Asp-141, and Asn-153. 173 to 174 contributes to the ATP binding site; it reads TD. One can recognise a PUA domain in the interval 280 to 358; sequence RGTLVLDDGA…EAIVRELGYM (79 aa).

Belongs to the glutamate 5-kinase family.

Its subcellular location is the cytoplasm. The catalysed reaction is L-glutamate + ATP = L-glutamyl 5-phosphate + ADP. It participates in amino-acid biosynthesis; L-proline biosynthesis; L-glutamate 5-semialdehyde from L-glutamate: step 1/2. Its function is as follows. Catalyzes the transfer of a phosphate group to glutamate to form L-glutamate 5-phosphate. The polypeptide is Glutamate 5-kinase (Pseudomonas syringae pv. tomato (strain ATCC BAA-871 / DC3000)).